Reading from the N-terminus, the 157-residue chain is SsrA-binding protein (157 aa).

The interval 126–157 (GLGKGKQAHDKREAVKERDWQRDRARLMRDRG) is disordered. The segment covering 132 to 157 (QAHDKREAVKERDWQRDRARLMRDRG) has biased composition (basic and acidic residues).

Belongs to the SmpB family.

It is found in the cytoplasm. In terms of biological role, required for rescue of stalled ribosomes mediated by trans-translation. Binds to transfer-messenger RNA (tmRNA), required for stable association of tmRNA with ribosomes. tmRNA and SmpB together mimic tRNA shape, replacing the anticodon stem-loop with SmpB. tmRNA is encoded by the ssrA gene; the 2 termini fold to resemble tRNA(Ala) and it encodes a 'tag peptide', a short internal open reading frame. During trans-translation Ala-aminoacylated tmRNA acts like a tRNA, entering the A-site of stalled ribosomes, displacing the stalled mRNA. The ribosome then switches to translate the ORF on the tmRNA; the nascent peptide is terminated with the 'tag peptide' encoded by the tmRNA and targeted for degradation. The ribosome is freed to recommence translation, which seems to be the essential function of trans-translation. This chain is SsrA-binding protein, found in Methylobacterium radiotolerans (strain ATCC 27329 / DSM 1819 / JCM 2831 / NBRC 15690 / NCIMB 10815 / 0-1).